The following is a 196-amino-acid chain: ATP-dependent Clp protease proteolytic subunit (196 aa).

Residue S101 is the Nucleophile of the active site. The active site involves H126.

The protein belongs to the peptidase S14 family. Component of the chloroplastic Clp protease core complex.

It is found in the plastid. Its subcellular location is the chloroplast stroma. It catalyses the reaction Hydrolysis of proteins to small peptides in the presence of ATP and magnesium. alpha-casein is the usual test substrate. In the absence of ATP, only oligopeptides shorter than five residues are hydrolyzed (such as succinyl-Leu-Tyr-|-NHMec, and Leu-Tyr-Leu-|-Tyr-Trp, in which cleavage of the -Tyr-|-Leu- and -Tyr-|-Trp bonds also occurs).. In terms of biological role, cleaves peptides in various proteins in a process that requires ATP hydrolysis. Has a chymotrypsin-like activity. Plays a major role in the degradation of misfolded proteins. The protein is ATP-dependent Clp protease proteolytic subunit of Aethionema cordifolium (Lebanon stonecress).